The primary structure comprises 675 residues: Acetyl-coenzyme A synthetase 2 (675 aa).

CoA is bound by residues arginine 206 to lysine 209 and threonine 325. ATP is bound by residues glycine 401–proline 403, aspartate 425–threonine 430, aspartate 516, and arginine 531. Serine 539 is a CoA binding site. Position 542 (arginine 542) interacts with ATP. Arginine 604 is a CoA binding site.

It belongs to the ATP-dependent AMP-binding enzyme family.

The enzyme catalyses acetate + ATP + CoA = acetyl-CoA + AMP + diphosphate. In Zygosaccharomyces bailii, this protein is Acetyl-coenzyme A synthetase 2 (ACS2).